Reading from the N-terminus, the 296-residue chain is Centromere protein O (296 aa).

Residues 17–105 are a coiled coil; it reads VLAHLERLET…NMKAILQAYR (89 aa).

The protein belongs to the CENP-O/MCM21 family. Component of the CENPA-CAD complex, composed of CENPI, CENPK, CENPL, CENPO, CENPP, CENPQ, CENPR and CENPS. The CENPA-CAD complex interacts with the CENPA-NAC complex, at least composed of CENPA, CENPC, CENPH, CENPM, CENPN, CENPT and CENPU.

It localises to the nucleus. The protein resides in the chromosome. Its subcellular location is the centromere. It is found in the kinetochore. Its function is as follows. Component of the CENPA-CAD (nucleosome distal) complex, a complex recruited to centromeres which is involved in assembly of kinetochore proteins, mitotic progression and chromosome segregation. May be involved in incorporation of newly synthesized CENPA into centromeres via its interaction with the CENPA-NAC complex. Modulates the kinetochore-bound levels of NDC80 complex. This is Centromere protein O (CENPO) from Bos taurus (Bovine).